The chain runs to 368 residues: tRNA-specific 2-thiouridylase MnmA (368 aa).

ATP is bound by residues 11 to 18 and M37; that span reads GMSGGVDS. Positions 97–99 are interaction with target base in tRNA; that stretch reads NPD. Catalysis depends on C102, which acts as the Nucleophile. C102 and C199 form a disulfide bridge. Residue G127 coordinates ATP. An interaction with tRNA region spans residues 149-151; it reads KDQ. The active-site Cysteine persulfide intermediate is C199. Residues 311–312 form an interaction with tRNA region; it reads RY.

Belongs to the MnmA/TRMU family. In terms of assembly, interacts with TusE.

Its subcellular location is the cytoplasm. It carries out the reaction S-sulfanyl-L-cysteinyl-[protein] + uridine(34) in tRNA + AH2 + ATP = 2-thiouridine(34) in tRNA + L-cysteinyl-[protein] + A + AMP + diphosphate + H(+). In terms of biological role, catalyzes the 2-thiolation of uridine at the wobble position (U34) of tRNA(Lys), tRNA(Glu) and tRNA(Gln), leading to the formation of s(2)U34, the first step of tRNA-mnm(5)s(2)U34 synthesis. Sulfur is provided by IscS, via a sulfur-relay system. Binds ATP and its substrate tRNAs. In Escherichia coli O157:H7, this protein is tRNA-specific 2-thiouridylase MnmA.